A 264-amino-acid chain; its full sequence is Glutamate racemase (264 aa).

Substrate is bound by residues 10–11 (DS) and 42–43 (YG). Cys73 functions as the Proton donor/acceptor in the catalytic mechanism. 74–75 (NT) lines the substrate pocket. Cys183 functions as the Proton donor/acceptor in the catalytic mechanism. 184–185 (TH) is a binding site for substrate.

This sequence belongs to the aspartate/glutamate racemases family.

The catalysed reaction is L-glutamate = D-glutamate. It participates in cell wall biogenesis; peptidoglycan biosynthesis. In terms of biological role, provides the (R)-glutamate required for cell wall biosynthesis. This Streptococcus agalactiae serotype III (strain NEM316) protein is Glutamate racemase.